A 258-amino-acid chain; its full sequence is MRPISATIKEIIDETPTIKTFRLDVDDWLHGKPGQYVMVWIRGVDEVPMTLSYDNAITVQKVGEATEALFKLKAGDSVGIRGPYGNGWEIVGDDILLISGGVGSAPLAPLGEKARRIGVNVTTLAGYRTKEEVHFEDRYRAAGELVVATDDGTYGKKGYVTDLLKSVDLKKFTQIYCCGPEKMMYRVLCALDEAGVAGLSQFSLQRYIKCGIGVCGSCCMDPDGLRVCRDGPVFDGETLLRSEMGKYARDASGRRQQI.

The region spanning 1 to 90 (MRPISATIKE…RGPYGNGWEI (90 aa)) is the FAD-binding FR-type domain. [2Fe-2S] cluster is bound by residues Cys210, Cys215, Cys218, and Cys228.

The protein belongs to the PyrK family. As to quaternary structure, heterotetramer of 2 PyrK and 2 PyrD type B subunits. [2Fe-2S] cluster serves as cofactor. The cofactor is FAD.

Its pathway is pyrimidine metabolism; UMP biosynthesis via de novo pathway; orotate from (S)-dihydroorotate (NAD(+) route): step 1/1. Responsible for channeling the electrons from the oxidation of dihydroorotate from the FMN redox center in the PyrD type B subunit to the ultimate electron acceptor NAD(+). The protein is Probable dihydroorotate dehydrogenase B (NAD(+)), electron transfer subunit of Methanocella arvoryzae (strain DSM 22066 / NBRC 105507 / MRE50).